The following is a 41-amino-acid chain: uncharacterized protein (41 aa).

This is an uncharacterized protein from Saccharomyces cerevisiae (strain ATCC 204508 / S288c) (Baker's yeast).